Consider the following 360-residue polypeptide: Peptide chain release factor 1 (360 aa).

An N5-methylglutamine modification is found at Q235.

The protein belongs to the prokaryotic/mitochondrial release factor family. Post-translationally, methylated by PrmC. Methylation increases the termination efficiency of RF1.

It localises to the cytoplasm. Functionally, peptide chain release factor 1 directs the termination of translation in response to the peptide chain termination codons UAG and UAA. This is Peptide chain release factor 1 from Burkholderia multivorans (strain ATCC 17616 / 249).